Consider the following 735-residue polypeptide: Ion-translocating oxidoreductase complex subunit C (735 aa).

2 consecutive 4Fe-4S ferredoxin-type domains span residues 368–397 (MGAP…QQLY) and 407–436 (KATA…VQYF). The [4Fe-4S] cluster site is built by cysteine 377, cysteine 380, cysteine 383, cysteine 387, cysteine 416, cysteine 419, cysteine 422, and cysteine 426. The interval 538-715 (KQAAHPMADS…PADPRKAAVA (178 aa)) is disordered. Over residues 556-565 (KAAVEAAIAR) the composition is skewed to low complexity.

Belongs to the 4Fe4S bacterial-type ferredoxin family. RnfC subfamily. In terms of assembly, the complex is composed of six subunits: RsxA, RsxB, RsxC, RsxD, RsxE and RsxG. Requires [4Fe-4S] cluster as cofactor.

The protein localises to the cell inner membrane. Its function is as follows. Part of a membrane-bound complex that couples electron transfer with translocation of ions across the membrane. Required to maintain the reduced state of SoxR. In Salmonella typhimurium (strain LT2 / SGSC1412 / ATCC 700720), this protein is Ion-translocating oxidoreductase complex subunit C.